Consider the following 385-residue polypeptide: Interleukin-13 receptor subunit alpha-2 (385 aa).

The N-terminal stretch at 1–23 is a signal peptide; the sequence is MALMAVNTRCLCLFLLCTITGHS. The Extracellular portion of the chain corresponds to 24–336; that stretch reads LEIKVNPPQD…WEGYTGPDSK (313 aa). 3 Fibronectin type-III domains span residues 30–130, 133–221, and 236–334; these read PPQD…ADEG, GTKI…PIRS, and PPEF…TGPD. An intrachain disulfide couples cysteine 61 to cysteine 109. Residue asparagine 111 is glycosylated (N-linked (GlcNAc...) asparagine). Cysteines 141 and 151 form a disulfide. Residue asparagine 164 is glycosylated (N-linked (GlcNAc...) asparagine). A disulfide bond links cysteine 180 and cysteine 193. Residues asparagine 211 and asparagine 295 are each glycosylated (N-linked (GlcNAc...) asparagine). Cysteine 265 and cysteine 312 are oxidised to a cystine. Residues 318 to 322 carry the WSXWS motif motif; the sequence is WSEWS. Residues 337–357 traverse the membrane as a helical segment; sequence IVFIVPVCLFFIFLLLLLCLI. The Cytoplasmic segment spans residues 358–385; that stretch reads VEKEDPEPTLSLHVDLNKEMYAYEETLC.

It belongs to the type I cytokine receptor family. Type 5 subfamily. Interacts with IL4RA. Interacts with high affinity to interleukin-13 (IL13), but not to interleukin-4 (IL4). Cleaved by MMP8 leading to a soluble form that is also able to interact with IL13.

The protein localises to the cell membrane. In terms of biological role, cell surface receptor that plays a role in the regulation of IL-13-mediated responses. Functions as a decoy receptor that inhibits IL-13- and IL-4-mediated signal transduction via the JAK-STAT pathway and thereby modulates immune responses and inflammation. Serves as a functional signaling receptor for IL-13 in an alternative pathway involving AP-1 ultimately leading to the production of TGFB1. This Rattus norvegicus (Rat) protein is Interleukin-13 receptor subunit alpha-2 (Il13ra2).